A 633-amino-acid polypeptide reads, in one-letter code: ATP-dependent zinc metalloprotease FtsH (633 aa).

The Cytoplasmic segment spans residues M1 to T19. Residues I20–L40 form a helical membrane-spanning segment. The Periplasmic segment spans residues Q41–E133. A helical transmembrane segment spans residues L134–A154. Topologically, residues A155–A633 are cytoplasmic. G226–T233 contacts ATP. H447 is a Zn(2+) binding site. Residue E448 is part of the active site. H451 and D523 together coordinate Zn(2+).

The protein in the central section; belongs to the AAA ATPase family. It in the C-terminal section; belongs to the peptidase M41 family. Homohexamer. Requires Zn(2+) as cofactor.

It is found in the cell inner membrane. In terms of biological role, acts as a processive, ATP-dependent zinc metallopeptidase for both cytoplasmic and membrane proteins. Plays a role in the quality control of integral membrane proteins. The polypeptide is ATP-dependent zinc metalloprotease FtsH (Marinobacter nauticus (strain ATCC 700491 / DSM 11845 / VT8) (Marinobacter aquaeolei)).